A 307-amino-acid chain; its full sequence is GTPase Era (307 aa).

The region spanning Arg17–Glu186 is the Era-type G domain. The interval Gly25–Ser32 is G1. Residue Gly25–Ser32 participates in GTP binding. Residues Gln51–Asn55 form a G2 region. Residues Asp72–Gly75 are G3. GTP-binding positions include Asp72–Phe76 and Asn133–Asp136. The tract at residues Asn133 to Asp136 is G4. The G5 stretch occupies residues Val165–Ala167. The KH type-2 domain maps to Leu217–Ser293.

This sequence belongs to the TRAFAC class TrmE-Era-EngA-EngB-Septin-like GTPase superfamily. Era GTPase family. In terms of assembly, monomer.

It is found in the cytoplasm. The protein localises to the cell inner membrane. An essential GTPase that binds both GDP and GTP, with rapid nucleotide exchange. Plays a role in 16S rRNA processing and 30S ribosomal subunit biogenesis and possibly also in cell cycle regulation and energy metabolism. The protein is GTPase Era of Neisseria meningitidis serogroup A / serotype 4A (strain DSM 15465 / Z2491).